Consider the following 1116-residue polypeptide: Eukaryotic translation initiation factor 2-alpha kinase 3 (1116 aa).

An N-terminal signal peptide occupies residues 1-29 (MERAISPGLLVRALLLLLLLLGLAARTVA). Topologically, residues 30–514 (AGRARGLPAP…HYNKNIRKKD (485 aa)) are lumenal. The interval 77-101 (ALPAAAGEQEPRGPEPDDETELRPR) is disordered. Residue asparagine 258 is glycosylated (N-linked (GlcNAc...) asparagine). The chain crosses the membrane as a helical span at residues 515-535 (PVLLLHWWKEIVATILFCIIA). Residues 536–1116 (TTFIVRRLFH…NNSHSPLPSN (581 aa)) lie on the Cytoplasmic side of the membrane. The interval 550–571 (RQRKESETQCQTENKYDSVSGE) is disordered. The Protein kinase domain occupies 593 to 1077 (FEPIQCLGRG…AINIIENAVF (485 aa)). ATP is bound at residue 599-607 (LGRGGFGVV). Tyrosine 619 carries the phosphotyrosine; by autocatalysis modification. Lysine 622 lines the ATP pocket. The insert loop stretch occupies residues 647–888 (EHPGIVRYFN…SPKVYLYIQM (242 aa)). The residue at position 715 (serine 715) is a Phosphoserine. Residue threonine 802 is modified to Phosphothreonine. Positions 841–863 (KPTSSKSSSEATLSISPPRPTTL) are disordered. A compositionally biased stretch (low complexity) spans 844 to 856 (SSKSSSEATLSIS). The active-site Proton acceptor is aspartate 937. Threonine 982 is modified (phosphothreonine). The tract at residues 1090 to 1116 (QRSRSLSSSGTKHSRQSNNSHSPLPSN) is disordered. Position 1094 is a phosphoserine (serine 1094). Positions 1105–1116 (QSNNSHSPLPSN) are enriched in polar residues.

The protein belongs to the protein kinase superfamily. Ser/Thr protein kinase family. GCN2 subfamily. Forms dimers with HSPA5/BIP in resting cells. Homotetramerizes in response to endoplasmic reticulum (ER) stress, leading to its activation. Interacts with HSP90B1/GRP94. Interacts with DNAJC3; inhibiting EIF2AK3/PERK activity. Interacts with ATAD3A; ATAD3A and EIF2S1/eIF-2-alpha occupy a common binding site within the cytoplasmic loop of EIF2AK3/PERK, leading to prevent EIF2AK3/PERK association with its substrate EIF2S1/eIF-2-alpha. Interacts with MFN2. Interacts with TMEM33. Interacts with PDIA6. Interacts with LACC1. Oligomerization of the N-terminal ER luminal domain by ER stress promotes EIF2AK3/PERK trans-autophosphorylation of the C-terminal cytoplasmic kinase domain at multiple residues including Thr-982 on the kinase activation loop. Autophosphorylated at Tyr-619 following endoplasmic reticulum stress, leading to activate its activity. Dephosphorylated at Tyr-619 by PTPN1/PTP1B, leading to inactivate its enzyme activity. Phosphorylation at Thr-802 by AKT (AKT1, AKT2 and/or AKT3) inactivates EIF2AK3/PERK. Post-translationally, ADP-ribosylated by PARP16 upon ER stress, which increases kinase activity. In terms of tissue distribution, ubiquitous. A high level expression is seen in secretory tissues.

The protein localises to the endoplasmic reticulum membrane. The catalysed reaction is L-seryl-[protein] + ATP = O-phospho-L-seryl-[protein] + ADP + H(+). The enzyme catalyses L-threonyl-[protein] + ATP = O-phospho-L-threonyl-[protein] + ADP + H(+). It carries out the reaction L-tyrosyl-[protein] + ATP = O-phospho-L-tyrosyl-[protein] + ADP + H(+). With respect to regulation, inhibited by HSPA5/BIP in absence of stress. Perturbation in protein folding in the endoplasmic reticulum (ER) promotes reversible dissociation from HSPA5/BIP and oligomerization, resulting in trans-autophosphorylation and kinase activity induction. Inactivated following phosphorylation at Thr-802 by AKT (AKT1, AKT2 and/or AKT3). Inhibited by ATAD3A at mitochondria-endoplasmic reticulum contact sites, providing a safe haven for mitochondrial protein translation during ER stress. Functionally, metabolic-stress sensing protein kinase that phosphorylates the alpha subunit of eukaryotic translation initiation factor 2 (EIF2S1/eIF-2-alpha) in response to various stress, such as unfolded protein response (UPR). Key effector of the integrated stress response (ISR) to unfolded proteins: EIF2AK3/PERK specifically recognizes and binds misfolded proteins, leading to its activation and EIF2S1/eIF-2-alpha phosphorylation. EIF2S1/eIF-2-alpha phosphorylation in response to stress converts EIF2S1/eIF-2-alpha in a global protein synthesis inhibitor, leading to a global attenuation of cap-dependent translation, while concomitantly initiating the preferential translation of ISR-specific mRNAs, such as the transcriptional activators ATF4 and QRICH1, and hence allowing ATF4- and QRICH1-mediated reprogramming. The EIF2AK3/PERK-mediated unfolded protein response increases mitochondrial oxidative phosphorylation by promoting ATF4-mediated expression of COX7A2L/SCAF1, thereby increasing formation of respiratory chain supercomplexes. In contrast to most subcellular compartments, mitochondria are protected from the EIF2AK3/PERK-mediated unfolded protein response due to EIF2AK3/PERK inhibition by ATAD3A at mitochondria-endoplasmic reticulum contact sites. In addition to EIF2S1/eIF-2-alpha, also phosphorylates NFE2L2/NRF2 in response to stress, promoting release of NFE2L2/NRF2 from the BCR(KEAP1) complex, leading to nuclear accumulation and activation of NFE2L2/NRF2. Serves as a critical effector of unfolded protein response (UPR)-induced G1 growth arrest due to the loss of cyclin-D1 (CCND1). Involved in control of mitochondrial morphology and function. The protein is Eukaryotic translation initiation factor 2-alpha kinase 3 of Homo sapiens (Human).